We begin with the raw amino-acid sequence, 511 residues long: Mesoderm induction early response protein 1 (511 aa).

The segment covering 1–16 (MAEPSVESSSPGGSAT) has biased composition (low complexity). The interval 1–171 (MAEPSVESSS…EEESEEDEDY (171 aa)) is disordered. Ser-10 carries the phosphoserine modification. The span at 17–36 (SEDHEFDPSADMLVHDFDDE) shows a compositional bias: basic and acidic residues. The segment covering 37–46 (RTLEEEEMME) has biased composition (acidic residues). Basic and acidic residues predominate over residues 57–66 (DLAREGDMPI). The segment covering 83-104 (EEEEEEEEEEEGEDDEDADNDD) has biased composition (acidic residues). Positions 128-143 (QSSNDDPSQSVTSQDA) are enriched in polar residues. Phosphoserine is present on Ser-140. Tyr-154 is subject to Phosphotyrosine. Phosphoserine occurs at positions 159 and 165. Over residues 159–171 (SEIEEESEEDEDY) the composition is skewed to acidic residues. Positions 179–277 (KEIMVGSMFQ…EALRRLRFNV (99 aa)) constitute an ELM2 domain. A Glycyl lysine isopeptide (Lys-Gly) (interchain with G-Cter in SUMO2) cross-link involves residue Lys-238. Residues 282–334 (EELSVWTEEECRNFEQGLKAYGKDFHLIQANKVRTRSVGECVAFYYMWKKSER) form the SANT domain. Residues 365 to 511 (ESESAASSRA…KFEEHENTND (147 aa)) form a disordered region. Residues Ser-366, Ser-368, and Ser-376 each carry the phosphoserine modification. The segment covering 397–408 (SSRNQNGVSSNG) has biased composition (polar residues). 2 stretches are compositionally biased toward basic and acidic residues: residues 413-422 (LNKEEVKVEG) and 461-474 (ARNE…NERP). Lys-419 participates in a covalent cross-link: Glycyl lysine isopeptide (Lys-Gly) (interchain with G-Cter in SUMO2). The segment covering 481–493 (NSSGKESPGSSEF) has biased composition (polar residues). Residues Ser-482, Ser-487, and Ser-490 each carry the phosphoserine modification. The span at 499 to 511 (SHGKFEEHENTND) shows a compositional bias: basic and acidic residues.

In terms of assembly, interacts with HDAC1. Part of a complex containing at least CDYL, MIER1, MIER2, HDAC1 and HDAC2. In terms of tissue distribution, ubiquitously expressed. Isoform 1 is only expressed in testis.

Its subcellular location is the nucleus. Functionally, transcriptional repressor regulating the expression of a number of genes including SP1 target genes. Probably functions through recruitment of HDAC1 a histone deacetylase involved in chromatin silencing. The chain is Mesoderm induction early response protein 1 (Mier1) from Mus musculus (Mouse).